The chain runs to 147 residues: Protein phosphatase 1 regulatory subunit 14A (147 aa).

Over residues 1 to 11 (MAAQRLGKRVL) the composition is skewed to basic residues. Residues 1–37 (MAAQRLGKRVLSKLQSPSRARGPGGSPGGLQKRHARV) form a disordered region. Position 26 is a phosphoserine (Ser-26). Residues 35–120 (ARVTVKYDRR…LLAKLQGLHR (86 aa)) are inhibitory. Position 38 is a phosphothreonine; by PKC (Thr-38). Positions 118-147 (LHRQPGLRQPSPSHDGSLSPLQDRARTAHP) are disordered. Residues 127–137 (PSPSHDGSLSP) show a composition bias toward polar residues. Phosphoserine occurs at positions 128, 134, and 136.

It belongs to the PP1 inhibitor family. In terms of tissue distribution, isoform 1 is detected in aorta and testis. Isoform 2 is detected in aorta.

It is found in the cytoplasm. Functionally, inhibitor of PPP1CA. Has over 1000-fold higher inhibitory activity when phosphorylated, creating a molecular switch for regulating the phosphorylation status of PPP1CA substrates and smooth muscle contraction. The polypeptide is Protein phosphatase 1 regulatory subunit 14A (PPP1R14A) (Homo sapiens (Human)).